A 300-amino-acid chain; its full sequence is UDP-N-acetylenolpyruvoylglucosamine reductase (300 aa).

The FAD-binding PCMH-type domain occupies 30-194; the sequence is RVGGPADFFV…IGATFVLDSD (165 aa). R174 is a catalytic residue. S223 acts as the Proton donor in catalysis. Residue E293 is part of the active site.

This sequence belongs to the MurB family. FAD serves as cofactor.

The protein localises to the cytoplasm. It carries out the reaction UDP-N-acetyl-alpha-D-muramate + NADP(+) = UDP-N-acetyl-3-O-(1-carboxyvinyl)-alpha-D-glucosamine + NADPH + H(+). It participates in cell wall biogenesis; peptidoglycan biosynthesis. Its function is as follows. Cell wall formation. The polypeptide is UDP-N-acetylenolpyruvoylglucosamine reductase (Geobacter sulfurreducens (strain ATCC 51573 / DSM 12127 / PCA)).